The primary structure comprises 249 residues: Triosephosphate isomerase (249 aa).

The substrate site is built by N12 and K14. Position 14 is an N6-acetyllysine (K14). Residue S21 is modified to Phosphoserine. 3'-nitrotyrosine is present on Y68. S80 carries the phosphoserine modification. Residue H96 is the Electrophile of the active site. S106 carries the phosphoserine modification. Residue K142 forms a Glycyl lysine isopeptide (Lys-Gly) (interchain with G-Cter in SUMO1) linkage. The residue at position 149 (K149) is an N6-succinyllysine. Position 156 is an N6-acetyllysine; alternate (K156). The residue at position 156 (K156) is an N6-succinyllysine; alternate. The residue at position 159 (S159) is a Phosphoserine. The active-site Proton acceptor is the E166. Residue T173 is modified to Phosphothreonine. K194 is modified (N6-acetyllysine; alternate). K194 is subject to N6-succinyllysine; alternate. K194 carries the N6-methyllysine; alternate modification. S198 is subject to Phosphoserine. At Y209 the chain carries 3'-nitrotyrosine. A Phosphoserine modification is found at S212. Residue T214 is modified to Phosphothreonine. Phosphoserine is present on S223. Residue K238 is modified to N6-acetyllysine.

The protein belongs to the triosephosphate isomerase family. As to quaternary structure, homodimer.

It localises to the cytoplasm. It catalyses the reaction D-glyceraldehyde 3-phosphate = dihydroxyacetone phosphate. It carries out the reaction dihydroxyacetone phosphate = methylglyoxal + phosphate. It functions in the pathway carbohydrate degradation; glycolysis; D-glyceraldehyde 3-phosphate from glycerone phosphate: step 1/1. The protein operates within carbohydrate biosynthesis; gluconeogenesis. Its function is as follows. Triosephosphate isomerase is an extremely efficient metabolic enzyme that catalyzes the interconversion between dihydroxyacetone phosphate (DHAP) and D-glyceraldehyde-3-phosphate (G3P) in glycolysis and gluconeogenesis. Functionally, it is also responsible for the non-negligible production of methylglyoxal a reactive cytotoxic side-product that modifies and can alter proteins, DNA and lipids. In Homo sapiens (Human), this protein is Triosephosphate isomerase (TPI1).